The primary structure comprises 364 residues: Coproporphyrin III ferrochelatase (364 aa).

Residues arginine 29 and tyrosine 118 each coordinate Fe-coproporphyrin III. Positions 169 and 250 each coordinate Fe(2+).

This sequence belongs to the ferrochelatase family.

The protein localises to the cytoplasm. The catalysed reaction is Fe-coproporphyrin III + 2 H(+) = coproporphyrin III + Fe(2+). It functions in the pathway porphyrin-containing compound metabolism; protoheme biosynthesis. In terms of biological role, involved in coproporphyrin-dependent heme b biosynthesis. Catalyzes the insertion of ferrous iron into coproporphyrin III to form Fe-coproporphyrin III. In Streptococcus pneumoniae (strain 70585), this protein is Coproporphyrin III ferrochelatase.